Reading from the N-terminus, the 94-residue chain is Small ribosomal subunit protein bS6 (94 aa).

This sequence belongs to the bacterial ribosomal protein bS6 family.

In terms of biological role, binds together with bS18 to 16S ribosomal RNA. The protein is Small ribosomal subunit protein bS6 of Akkermansia muciniphila (strain ATCC BAA-835 / DSM 22959 / JCM 33894 / BCRC 81048 / CCUG 64013 / CIP 107961 / Muc).